A 231-amino-acid polypeptide reads, in one-letter code: Uracil-DNA glycosylase (231 aa).

The Proton acceptor role is filled by aspartate 70.

The protein belongs to the uracil-DNA glycosylase (UDG) superfamily. UNG family.

Its subcellular location is the cytoplasm. The enzyme catalyses Hydrolyzes single-stranded DNA or mismatched double-stranded DNA and polynucleotides, releasing free uracil.. Functionally, excises uracil residues from the DNA which can arise as a result of misincorporation of dUMP residues by DNA polymerase or due to deamination of cytosine. The protein is Uracil-DNA glycosylase of Campylobacter curvus (strain 525.92).